Here is a 145-residue protein sequence, read N- to C-terminus: Protein SprT-like (145 aa).

The SprT-like domain maps to Thr4–Ile140. Residue His64 coordinates Zn(2+). Residue Glu65 is part of the active site. Zn(2+) is bound at residue His68.

The protein belongs to the SprT family. Zn(2+) is required as a cofactor.

The protein resides in the cytoplasm. This Streptococcus pyogenes serotype M6 (strain ATCC BAA-946 / MGAS10394) protein is Protein SprT-like.